The chain runs to 128 residues: S-adenosylmethionine decarboxylase proenzyme (128 aa).

Ser-61 functions as the Schiff-base intermediate with substrate; via pyruvic acid in the catalytic mechanism. Pyruvic acid (Ser); by autocatalysis is present on Ser-61. The active-site Proton acceptor; for processing activity is His-66. Residue Cys-81 is the Proton donor; for catalytic activity of the active site.

This sequence belongs to the prokaryotic AdoMetDC family. Type 1 subfamily. As to quaternary structure, heterotetramer of two alpha and two beta chains arranged as a dimer of alpha/beta heterodimers. Pyruvate is required as a cofactor. In terms of processing, is synthesized initially as an inactive proenzyme. Formation of the active enzyme involves a self-maturation process in which the active site pyruvoyl group is generated from an internal serine residue via an autocatalytic post-translational modification. Two non-identical subunits are generated from the proenzyme in this reaction, and the pyruvate is formed at the N-terminus of the alpha chain, which is derived from the carboxyl end of the proenzyme. The post-translation cleavage follows an unusual pathway, termed non-hydrolytic serinolysis, in which the side chain hydroxyl group of the serine supplies its oxygen atom to form the C-terminus of the beta chain, while the remainder of the serine residue undergoes an oxidative deamination to produce ammonia and the pyruvoyl group blocking the N-terminus of the alpha chain.

It carries out the reaction S-adenosyl-L-methionine + H(+) = S-adenosyl 3-(methylsulfanyl)propylamine + CO2. It participates in amine and polyamine biosynthesis; S-adenosylmethioninamine biosynthesis; S-adenosylmethioninamine from S-adenosyl-L-methionine: step 1/1. In terms of biological role, catalyzes the decarboxylation of S-adenosylmethionine to S-adenosylmethioninamine (dcAdoMet), the propylamine donor required for the synthesis of the polyamines spermine and spermidine from the diamine putrescine. The sequence is that of S-adenosylmethionine decarboxylase proenzyme from Parasynechococcus marenigrum (strain WH8102).